The chain runs to 292 residues: Probable alpha-L-glutamate ligase (292 aa).

The ATP-grasp domain maps to 104 to 287; sequence HQLLAAKGID…VATRIIEHVE (184 aa). ATP contacts are provided by residues lysine 141, 178–179, aspartate 187, and 211–213; these read EF and RSN. 3 residues coordinate Mg(2+): aspartate 248, glutamate 260, and asparagine 262. Mn(2+) is bound by residues aspartate 248, glutamate 260, and asparagine 262.

Belongs to the RimK family. Mg(2+) serves as cofactor. Mn(2+) is required as a cofactor.

In Stenotrophomonas maltophilia (strain R551-3), this protein is Probable alpha-L-glutamate ligase.